We begin with the raw amino-acid sequence, 275 residues long: Large ribosomal subunit protein uL2c (275 aa).

The tract at residues Thr-28–Trp-53 is disordered.

This sequence belongs to the universal ribosomal protein uL2 family. As to quaternary structure, part of the 50S ribosomal subunit.

The protein resides in the plastid. The protein localises to the chloroplast. The polypeptide is Large ribosomal subunit protein uL2c (rpl2) (Nephroselmis olivacea (Green alga)).